The chain runs to 208 residues: Ypt/Rab-type GTPase YPT7 (208 aa).

Residues 17–23, 33–40, Gly67, and 126–129 contribute to the GTP site; these read SGVGKTS, YSQQYKAT, and NKID. The Effector region motif lies at 37–45; that stretch reads YKATIGADF. A Glycyl lysine isopeptide (Lys-Gly) (interchain with G-Cter in ubiquitin) cross-link involves residue Lys147. 158 to 160 contributes to the GTP binding site; the sequence is SAK. S-geranylgeranyl cysteine attachment occurs at residues Cys206 and Cys208. The residue at position 208 (Cys208) is a Cysteine methyl ester.

The protein belongs to the small GTPase superfamily. Rab family. Interacts with IVY1. Interacts with YIF1, YIP4 and YIP5. Interacts with the HOPS complex. Interacts with the class C-Vps complex. Interacts with VPS35. Interacts with VPS39. Interacts with the GDP dissociation inhibitor GDI1. Interacts with CCZ1.

It is found in the late endosome. Its subcellular location is the vacuole membrane. With respect to regulation, rab activation is generally mediated by a guanine exchange factor (GEF), while inactivation through hydrolysis of bound GTP is catalyzed by a GTPase activating protein (GAP). YPT7 is activated by GEFs MON1-CCZ1 complex (MC1) and VAM6/VPS39, and inactivated by GAPs GYP7 and GYP1. Functionally, ypt/Rab-type GTPases are key regulators of membrane trafficking and intracellular vesicular transport. They act as molecular switches that convert between GTP-bound and GDP-bound states, and regulate virtually all steps of membrane traffic from the formation of the transport vesicle at the donor membrane to its fusion at the target membrane. In the GDP-bound state, Ypt proteins are predominantly cytosolic, solubilized through the interaction with a GDP dissociation inhibitor (GDI). In the GTP-bound state, the proteins are membrane bound and interact with specific effector proteins that select cargo, promote vesicle movement, or verify the correct site of fusion. Involved in regulation of vesicular protein transport in exo- and endocytosis. Involved in regulation of late endosome to vacuole trafficking and homotypic vacuole fusion, by interacting in its GTP-bound state on the donor membrane with the large multiprotein HOPS/class C-Vps tethering complex on the acceptor membrane. Involved in retromer assembly and cargo export, recognizing the cargo selection complex (CSC). GTP-bound YPT7 recruits CSC to vacuolar membranes via retromer subunit VPS35. Interacts with the HOPS complex subunit VPS39 independent of the HOPS complex at mitochondria-vacuole contact sites (vCLAMPs), providing a physical and metabolic interconnection between the endocytic pathway and mitochondria. The polypeptide is Ypt/Rab-type GTPase YPT7 (YPT7) (Saccharomyces cerevisiae (strain ATCC 204508 / S288c) (Baker's yeast)).